We begin with the raw amino-acid sequence, 233 residues long: Movement and silencing protein TGBp1 (233 aa).

The region spanning 1–133 is the (+)RNA virus helicase ATP-binding domain; that stretch reads MNHFINLLVA…CKLLSSLGIK (133 aa). Positions 134–233 constitute a (+)RNA virus helicase C-terminal domain; the sequence is VESHRRDRDV…EFPHTTSRPQ (100 aa).

This sequence belongs to the Tymovirales TGBp1 protein family. Homodimer and homooligomer. Interacts with capsid protein. Interacts with host AGO1; this interaction targets the host protein for degradation, thereby suppressing the antiviral RNA silencing.

The protein localises to the host cytoplasm. Transports viral genome to neighboring plant cells directly through plasmosdesmata, without any budding. The movement protein allows efficient cell to cell propagation, by bypassing the host cell wall barrier. Increases plasmodesma size exclusion limit. Acts as a suppressor of RNA-mediated gene silencing, also known as post-transcriptional gene silencing (PTGS), a mechanism of plant viral defense that limits the accumulation of viral RNAs. The protein is Movement and silencing protein TGBp1 of Carica papaya (Papaya).